The sequence spans 537 residues: Apolipoprotein N-acyltransferase (537 aa).

6 helical membrane passes run 10-30 (IALAIILTWGWKRALVAITAG), 37-57 (LAPFNLFPVLFITFPVLVWLI), 76-96 (YWFGLGYFVPGLYWIGYAFFV), 107-127 (FAVLGLPAYLSIFTAIGFALA), 181-201 (IGLWGMTFLTVAIFASPATLI), and 210-230 (AWRAPAAAVALLIAMSIFGAI). Residues 248–501 (MQPNLQQDAK…EGILDASLPA (254 aa)) form the CN hydrolase domain. E295 serves as the catalytic Proton acceptor. The active site involves K360. The active-site Nucleophile is C413. A helical transmembrane segment spans residues 507–527 (IYARVGDVPAAVLVALAVLLA).

This sequence belongs to the CN hydrolase family. Apolipoprotein N-acyltransferase subfamily.

It localises to the cell inner membrane. It carries out the reaction N-terminal S-1,2-diacyl-sn-glyceryl-L-cysteinyl-[lipoprotein] + a glycerophospholipid = N-acyl-S-1,2-diacyl-sn-glyceryl-L-cysteinyl-[lipoprotein] + a 2-acyl-sn-glycero-3-phospholipid + H(+). It participates in protein modification; lipoprotein biosynthesis (N-acyl transfer). In terms of biological role, catalyzes the phospholipid dependent N-acylation of the N-terminal cysteine of apolipoprotein, the last step in lipoprotein maturation. The chain is Apolipoprotein N-acyltransferase from Bradyrhizobium diazoefficiens (strain JCM 10833 / BCRC 13528 / IAM 13628 / NBRC 14792 / USDA 110).